The chain runs to 1463 residues: Gag-Pol polyprotein (1463 aa).

Glycine 2 carries N-myristoyl glycine; by host lipidation. Residues 7–31 form an interaction with Gp41 region; sequence VLRGKKADELEKIRLRPGGKKKYRL. Positions 16–22 match the Nuclear export signal motif; sequence LEKIRLR. The Nuclear localization signal signature appears at 26 to 32; that stretch reads KKKYRLK. The tract at residues 112-138 is disordered; that stretch reads TKTTEKMPSTSRPTAPPSGNGGNFPVQ. Residues 191–228 are interaction with human PPIA/CYPA and NUP153; the sequence is NCVGDHQAAMQIIREIINEEAADWDAQHPIPGPLPAGQ. Positions 279 to 365 are dimerization/Multimerization of capsid protein p24; the sequence is YNPTNILDIK…GGPGQKARLM (87 aa). 2 CCHC-type zinc fingers span residues 389-406 and 410-427; these read IKCW…QCRA and QGCW…KCPE. The interval 441–508 is disordered; sequence EAPQFPCGPN…TRDTMQRDDR (68 aa). Basic and acidic residues predominate over residues 462–508; the sequence is RPSRGPTREVHAAREKAERAEREAIQRSDRGLPAARETRDTMQRDDR. A dimerization of protease region spans residues 513–517; sequence PQFSL. A Peptidase A2 domain is found at 532–601; sequence VEVLLDTGAD…TPINIFGRNI (70 aa). The active-site For protease activity; shared with dimeric partner is the aspartate 537. Dimerization of protease stretches follow at residues 561–567 and 600–612; these read GIGGFIN and NILT…LNLP. Residues 655-845 form the Reverse transcriptase domain; it reads EGQLEEAPPT…PPYQWMGYEL (191 aa). Residues aspartate 721, aspartate 796, and aspartate 797 each coordinate Mg(2+). The interval 838–846 is RT 'primer grip'; the sequence is YQWMGYELW. A Tryptophan repeat motif motif is present at residues 1008-1024; sequence WEQWWDNYWQVTWIPDW. Positions 1044-1167 constitute an RNase H type-1 domain; the sequence is ILGAETFYTD…VDHLVSQGIR (124 aa). Residues aspartate 1053, glutamate 1088, aspartate 1108, and aspartate 1159 each contribute to the Mg(2+) site. The segment at 1173–1214 adopts an Integrase-type zinc-finger fold; the sequence is EKIEPAQEEHEKYHSNVKELSHKFGLPKLVARQIVNTCTQCQ. The Zn(2+) site is built by histidine 1182, histidine 1186, cysteine 1210, and cysteine 1213. An Integrase catalytic domain is found at 1223–1374; the sequence is QVNAELGTWQ…TPAERLINMV (152 aa). The Mg(2+) site is built by aspartate 1234, aspartate 1286, and glutamate 1322. The integrase-type DNA-binding region spans 1393–1440; the sequence is FRVYFREGRDQLWKGPGELLWKGDGAVIVKVGADIKIIPRRKAKIIKD.

As to quaternary structure, homotrimer; further assembles as hexamers of trimers. Interacts with gp41 (via C-terminus). Interacts with host CALM1; this interaction induces a conformational change in the Matrix protein, triggering exposure of the myristate group. Interacts with host AP3D1; this interaction allows the polyprotein trafficking to multivesicular bodies during virus assembly. Part of the pre-integration complex (PIC) which is composed of viral genome, matrix protein, Vpr and integrase. Homodimer; the homodimer further multimerizes as homohexamers or homopentamers. Interacts with human PPIA/CYPA. Interacts with human NUP153. Interacts with host PDZD8; this interaction stabilizes the capsid. Interacts with monkey TRIM5; this interaction destabilizes the capsid. In terms of assembly, homodimer, whose active site consists of two apposed aspartic acid residues. As to quaternary structure, heterodimer of p66 RT and p51 RT (RT p66/p51). Heterodimerization of RT is essential for DNA polymerase activity. The overall folding of the subdomains is similar in p66 RT and p51 RT but the spatial arrangements of the subdomains are dramatically different. Homotetramer; may further associate as a homohexadecamer. Part of the pre-integration complex (PIC) which is composed of viral genome, matrix protein, Vpr and integrase. Interacts with human SMARCB1/INI1 and human PSIP1/LEDGF isoform 1. Interacts with human KPNA3; this interaction might play a role in nuclear import of the pre-integration complex. Interacts with human NUP153; this interaction might play a role in nuclear import of the pre-integration complex. Requires Mg(2+) as cofactor. Post-translationally, specific enzymatic cleavages by the viral protease yield mature proteins. The protease is released by autocatalytic cleavage. The polyprotein is cleaved during and after budding, this process is termed maturation. Proteolytic cleavage of p66 RT removes the RNase H domain to yield the p51 RT subunit. Nucleocapsid protein p7 might be further cleaved after virus entry.

It is found in the host cell membrane. The protein resides in the host endosome. It localises to the host multivesicular body. The protein localises to the virion membrane. Its subcellular location is the host nucleus. It is found in the host cytoplasm. The protein resides in the virion. The enzyme catalyses Endopeptidase for which the P1 residue is preferably hydrophobic.. It catalyses the reaction Endohydrolysis of RNA in RNA/DNA hybrids. Three different cleavage modes: 1. sequence-specific internal cleavage of RNA. Human immunodeficiency virus type 1 and Moloney murine leukemia virus enzymes prefer to cleave the RNA strand one nucleotide away from the RNA-DNA junction. 2. RNA 5'-end directed cleavage 13-19 nucleotides from the RNA end. 3. DNA 3'-end directed cleavage 15-20 nucleotides away from the primer terminus.. It carries out the reaction 3'-end directed exonucleolytic cleavage of viral RNA-DNA hybrid.. The catalysed reaction is DNA(n) + a 2'-deoxyribonucleoside 5'-triphosphate = DNA(n+1) + diphosphate. Protease: The viral protease is inhibited by many synthetic protease inhibitors (PIs), such as amprenavir, atazanavir, indinavir, loprinavir, nelfinavir, ritonavir and saquinavir. Use of protease inhibitors in tritherapy regimens permit more ambitious therapeutic strategies. Reverse transcriptase/ribonuclease H: RT can be inhibited either by nucleoside RT inhibitors (NRTIs) or by non nucleoside RT inhibitors (NNRTIs). NRTIs act as chain terminators, whereas NNRTIs inhibit DNA polymerization by binding a small hydrophobic pocket near the RT active site and inducing an allosteric change in this region. Classical NRTIs are abacavir, adefovir (PMEA), didanosine (ddI), lamivudine (3TC), stavudine (d4T), tenofovir (PMPA), zalcitabine (ddC), and zidovudine (AZT). Classical NNRTIs are atevirdine (BHAP U-87201E), delavirdine, efavirenz (DMP-266), emivirine (I-EBU), and nevirapine (BI-RG-587). The tritherapies used as a basic effective treatment of AIDS associate two NRTIs and one NNRTI. Its function is as follows. Mediates, with Gag polyprotein, the essential events in virion assembly, including binding the plasma membrane, making the protein-protein interactions necessary to create spherical particles, recruiting the viral Env proteins, and packaging the genomic RNA via direct interactions with the RNA packaging sequence (Psi). Gag-Pol polyprotein may regulate its own translation, by the binding genomic RNA in the 5'-UTR. At low concentration, the polyprotein would promote translation, whereas at high concentration, the polyprotein would encapsidate genomic RNA and then shut off translation. Targets the polyprotein to the plasma membrane via a multipartite membrane-binding signal, that includes its myristoylated N-terminus. Matrix protein is part of the pre-integration complex. Implicated in the release from host cell mediated by Vpu. Binds to RNA. In terms of biological role, forms the conical core that encapsulates the genomic RNA-nucleocapsid complex in the virion. Most core are conical, with only 7% tubular. The core is constituted by capsid protein hexamer subunits. The core is disassembled soon after virion entry. Host restriction factors such as TRIM5-alpha or TRIMCyp bind retroviral capsids and cause premature capsid disassembly, leading to blocks in reverse transcription. Capsid restriction by TRIM5 is one of the factors which restricts HIV-1 to the human species. Host PIN1 apparently facilitates the virion uncoating. On the other hand, interactions with PDZD8 or CYPA stabilize the capsid. Functionally, encapsulates and protects viral dimeric unspliced genomic RNA (gRNA). Binds these RNAs through its zinc fingers. Acts as a nucleic acid chaperone which is involved in rearangement of nucleic acid secondary structure during gRNA retrotranscription. Also facilitates template switch leading to recombination. As part of the polyprotein, participates in gRNA dimerization, packaging, tRNA incorporation and virion assembly. Its function is as follows. Aspartyl protease that mediates proteolytic cleavages of Gag and Gag-Pol polyproteins during or shortly after the release of the virion from the plasma membrane. Cleavages take place as an ordered, step-wise cascade to yield mature proteins. This process is called maturation. Displays maximal activity during the budding process just prior to particle release from the cell. Also cleaves Nef and Vif, probably concomitantly with viral structural proteins on maturation of virus particles. Hydrolyzes host EIF4GI and PABP1 in order to shut off the capped cellular mRNA translation. The resulting inhibition of cellular protein synthesis serves to ensure maximal viral gene expression and to evade host immune response. Multifunctional enzyme that converts the viral RNA genome into dsDNA in the cytoplasm, shortly after virus entry into the cell. This enzyme displays a DNA polymerase activity that can copy either DNA or RNA templates, and a ribonuclease H (RNase H) activity that cleaves the RNA strand of RNA-DNA heteroduplexes in a partially processive 3' to 5' endonucleasic mode. Conversion of viral genomic RNA into dsDNA requires many steps. A tRNA(3)-Lys binds to the primer-binding site (PBS) situated at the 5'-end of the viral RNA. RT uses the 3' end of the tRNA primer to perform a short round of RNA-dependent minus-strand DNA synthesis. The reading proceeds through the U5 region and ends after the repeated (R) region which is present at both ends of viral RNA. The portion of the RNA-DNA heteroduplex is digested by the RNase H, resulting in a ssDNA product attached to the tRNA primer. This ssDNA/tRNA hybridizes with the identical R region situated at the 3' end of viral RNA. This template exchange, known as minus-strand DNA strong stop transfer, can be either intra- or intermolecular. RT uses the 3' end of this newly synthesized short ssDNA to perform the RNA-dependent minus-strand DNA synthesis of the whole template. RNase H digests the RNA template except for two polypurine tracts (PPTs) situated at the 5'-end and near the center of the genome. It is not clear if both polymerase and RNase H activities are simultaneous. RNase H probably can proceed both in a polymerase-dependent (RNA cut into small fragments by the same RT performing DNA synthesis) and a polymerase-independent mode (cleavage of remaining RNA fragments by free RTs). Secondly, RT performs DNA-directed plus-strand DNA synthesis using the PPTs that have not been removed by RNase H as primers. PPTs and tRNA primers are then removed by RNase H. The 3' and 5' ssDNA PBS regions hybridize to form a circular dsDNA intermediate. Strand displacement synthesis by RT to the PBS and PPT ends produces a blunt ended, linear dsDNA copy of the viral genome that includes long terminal repeats (LTRs) at both ends. In terms of biological role, catalyzes viral DNA integration into the host chromosome, by performing a series of DNA cutting and joining reactions. This enzyme activity takes place after virion entry into a cell and reverse transcription of the RNA genome in dsDNA. The first step in the integration process is 3' processing. This step requires a complex comprising the viral genome, matrix protein, Vpr and integrase. This complex is called the pre-integration complex (PIC). The integrase protein removes 2 nucleotides from each 3' end of the viral DNA, leaving recessed CA OH's at the 3' ends. In the second step, the PIC enters cell nucleus. This process is mediated through integrase and Vpr proteins, and allows the virus to infect a non dividing cell. This ability to enter the nucleus is specific of lentiviruses, other retroviruses cannot and rely on cell division to access cell chromosomes. In the third step, termed strand transfer, the integrase protein joins the previously processed 3' ends to the 5' ends of strands of target cellular DNA at the site of integration. The 5'-ends are produced by integrase-catalyzed staggered cuts, 5 bp apart. A Y-shaped, gapped, recombination intermediate results, with the 5'-ends of the viral DNA strands and the 3' ends of target DNA strands remaining unjoined, flanking a gap of 5 bp. The last step is viral DNA integration into host chromosome. This involves host DNA repair synthesis in which the 5 bp gaps between the unjoined strands are filled in and then ligated. Since this process occurs at both cuts flanking the HIV genome, a 5 bp duplication of host DNA is produced at the ends of HIV-1 integration. Alternatively, Integrase may catalyze the excision of viral DNA just after strand transfer, this is termed disintegration. The protein is Gag-Pol polyprotein (gag-pol) of Human immunodeficiency virus type 2 subtype A (isolate ST) (HIV-2).